The primary structure comprises 131 residues: MALICELDEQWSFVGSKARQHWLWYAYNTKTGGVLAYTFGPRTDETCRELLALLTPFNIGMLTSDDWGSYGREVPKDKHLTGKIFTQRIERNNLTLRTRIKRLARKTICFSRSVEIHEKVIGTFIEKHMFY.

This sequence belongs to the transposase 27 family.

Absolutely required for transposition of IS1. In Shigella dysenteriae, this protein is Insertion element iso-IS1n protein InsB (insB).